The chain runs to 246 residues: Dof zinc finger protein DOF4.7 (246 aa).

2 stretches are compositionally biased toward polar residues: residues 1-12 and 27-37; these read MMTSSHQSNTTG and QINNKEPSPAT. Positions 1-39 are disordered; it reads MMTSSHQSNTTGFKPRRIKTTAKPPRQINNKEPSPATQP. The segment at 41-95 adopts a Dof-type zinc-finger fold; sequence LKCPRCDSVNTKFCYYNNYSLSQPRHYCKNCRRYWTRGGALRNVPIGGSTRNKNK. Zn(2+) is bound by residues C43, C46, C68, and C71. Residues 216–235 form a disordered region; that stretch reads GGATSGNHEDNDDGEGNLGN.

In terms of assembly, interacts with ZFP2. In terms of tissue distribution, highly expressed at the base of all organs of the flower, especially in the abscission zone (AZ) of petals, stamens and sepals. Expressed at low levels in sepals, filaments, stigmatic papillae, tips of young siliques, and at the base of pedicels and leaf trichomes.

The protein resides in the nucleus. In terms of biological role, transcription factor that binds specifically to a 5'-AA[AG]G-3' consensus core sequence. Involved in the negative regulation of floral organ abscission by binding to the typical DOF 5'-AAAG-3' sequences in the promoter of ADPG2/PGAZAT, and by down-regulating its expression. ADPG2/PGAZAT is an abscission-related and cell wall hydrolyzing polygalacturonase. May act through the interaction with ZFP2, an abscission-related transcription factor. In Arabidopsis thaliana (Mouse-ear cress), this protein is Dof zinc finger protein DOF4.7.